Consider the following 180-residue polypeptide: Cytochrome b6-f complex iron-sulfur subunit (180 aa).

Residues 21–43 (LLTFGTITGTALGALYPVVKYFI) form a helical membrane-spanning segment. Residues 66-162 (VSEYLAKHLP…ATVTEDDKLV (97 aa)) enclose the Rieske domain. Positions 108, 110, 126, and 129 each coordinate [2Fe-2S] cluster. Cys113 and Cys128 are oxidised to a cystine.

This sequence belongs to the Rieske iron-sulfur protein family. In terms of assembly, the 4 large subunits of the cytochrome b6-f complex are cytochrome b6, subunit IV (17 kDa polypeptide, PetD), cytochrome f and the Rieske protein, while the 4 small subunits are PetG, PetL, PetM and PetN. The complex functions as a dimer. It depends on [2Fe-2S] cluster as a cofactor.

Its subcellular location is the cellular thylakoid membrane. It catalyses the reaction 2 oxidized [plastocyanin] + a plastoquinol + 2 H(+)(in) = 2 reduced [plastocyanin] + a plastoquinone + 4 H(+)(out). Functionally, component of the cytochrome b6-f complex, which mediates electron transfer between photosystem II (PSII) and photosystem I (PSI), cyclic electron flow around PSI, and state transitions. This chain is Cytochrome b6-f complex iron-sulfur subunit, found in Thermosynechococcus vestitus (strain NIES-2133 / IAM M-273 / BP-1).